A 101-amino-acid chain; its full sequence is MIPGELMPAAGDLTLNEGAEALTLMVANTGDRPVQVGSHYHFAEANPALDFDREAARGLRLDIAAGTAVRFEPGQRREVPLIPIGGARRIFGFNAEIMGDL.

It belongs to the urease beta subunit family. In terms of assembly, heterotrimer of UreA (gamma), UreB (beta) and UreC (alpha) subunits. Three heterotrimers associate to form the active enzyme.

Its subcellular location is the cytoplasm. It catalyses the reaction urea + 2 H2O + H(+) = hydrogencarbonate + 2 NH4(+). It participates in nitrogen metabolism; urea degradation; CO(2) and NH(3) from urea (urease route): step 1/1. The polypeptide is Urease subunit beta (Ruegeria sp. (strain TM1040) (Silicibacter sp.)).